The sequence spans 101 residues: RNA-3 uncharacterized 11.6 kDa protein (101 aa).

The protein is RNA-3 uncharacterized 11.6 kDa protein of Beet necrotic yellow vein mosaic virus (isolate Yugoslavia/G1) (BNYVV).